Here is a 60-residue protein sequence, read N- to C-terminus: Large ribosomal subunit protein uL30 (60 aa).

It belongs to the universal ribosomal protein uL30 family. As to quaternary structure, part of the 50S ribosomal subunit.

This chain is Large ribosomal subunit protein uL30, found in Moorella thermoacetica (strain ATCC 39073 / JCM 9320).